The following is a 517-amino-acid chain: Bifunctional purine biosynthesis protein PurH (517 aa).

Positions 1-145 constitute an MGS-like domain; it reads MSPLALVSVS…KNHKDVSVLV (145 aa).

Belongs to the PurH family.

The catalysed reaction is (6R)-10-formyltetrahydrofolate + 5-amino-1-(5-phospho-beta-D-ribosyl)imidazole-4-carboxamide = 5-formamido-1-(5-phospho-D-ribosyl)imidazole-4-carboxamide + (6S)-5,6,7,8-tetrahydrofolate. The enzyme catalyses IMP + H2O = 5-formamido-1-(5-phospho-D-ribosyl)imidazole-4-carboxamide. The protein operates within purine metabolism; IMP biosynthesis via de novo pathway; 5-formamido-1-(5-phospho-D-ribosyl)imidazole-4-carboxamide from 5-amino-1-(5-phospho-D-ribosyl)imidazole-4-carboxamide (10-formyl THF route): step 1/1. Its pathway is purine metabolism; IMP biosynthesis via de novo pathway; IMP from 5-formamido-1-(5-phospho-D-ribosyl)imidazole-4-carboxamide: step 1/1. The protein is Bifunctional purine biosynthesis protein PurH of Prochlorococcus marinus (strain MIT 9312).